Reading from the N-terminus, the 310-residue chain is Ribosomal RNA small subunit methyltransferase H (310 aa).

Residues 40–42 (GGH), Asp-59, Phe-89, Asp-104, and Gln-111 contribute to the S-adenosyl-L-methionine site.

The protein belongs to the methyltransferase superfamily. RsmH family.

It localises to the cytoplasm. The catalysed reaction is cytidine(1402) in 16S rRNA + S-adenosyl-L-methionine = N(4)-methylcytidine(1402) in 16S rRNA + S-adenosyl-L-homocysteine + H(+). In terms of biological role, specifically methylates the N4 position of cytidine in position 1402 (C1402) of 16S rRNA. The protein is Ribosomal RNA small subunit methyltransferase H of Amoebophilus asiaticus (strain 5a2).